Here is a 392-residue protein sequence, read N- to C-terminus: Selenide, water dikinase 1 (392 aa).

The active site involves Cys-31. ATP-binding positions include Lys-32, Gly-67–Asp-69, Asp-87, Asp-110, and Gly-161–Thr-164. Mg(2+) is bound at residue Asp-69. Residue Asp-110 participates in Mg(2+) binding. Position 265 (Asp-265) interacts with Mg(2+).

It belongs to the selenophosphate synthase 1 family. Class II subfamily. As to quaternary structure, homodimer. Requires Mg(2+) as cofactor.

The protein resides in the cell membrane. It localises to the nucleus membrane. It catalyses the reaction hydrogenselenide + ATP + H2O = selenophosphate + AMP + phosphate + 2 H(+). Its function is as follows. Synthesizes selenophosphate from selenide and ATP. This is Selenide, water dikinase 1 (sephs1) from Xenopus tropicalis (Western clawed frog).